Here is a 329-residue protein sequence, read N- to C-terminus: Flotillin-like protein FloA (329 aa).

2 helical membrane-spanning segments follow: residues 4-24 and 26-46; these read IGFI…FSFV and VGLW…TLVG.

It belongs to the flotillin-like FloA family. As to quaternary structure, homooligomerizes.

The protein localises to the cell membrane. It localises to the membrane raft. In terms of biological role, found in functional membrane microdomains (FMM) that may be equivalent to eukaryotic membrane rafts. FMMs are highly dynamic and increase in number as cells age. Flotillins are thought to be important factors in membrane fluidity. The protein is Flotillin-like protein FloA of Staphylococcus epidermidis (strain ATCC 35984 / DSM 28319 / BCRC 17069 / CCUG 31568 / BM 3577 / RP62A).